Here is a 238-residue protein sequence, read N- to C-terminus: Hydatid disease diagnostic antigen P-29 (238 aa).

The BAR domain maps to 18–238 (GELVNKNEKT…AKECSMMLGE (221 aa)).

The chain is Hydatid disease diagnostic antigen P-29 from Echinococcus granulosus (Hydatid tapeworm).